Here is a 284-residue protein sequence, read N- to C-terminus: Probable O-methyltransferase ustE (284 aa).

N-linked (GlcNAc...) asparagine glycosylation is found at N22 and N29. 2 helical membrane passes run L88 to V108 and Y157 to I177. An N-linked (GlcNAc...) asparagine glycan is attached at N205. Residues G215–W235 form a helical membrane-spanning segment. A glycan (N-linked (GlcNAc...) asparagine) is linked at N264.

Belongs to the class VI-like SAM-binding methyltransferase superfamily. Isoprenylcysteine carboxyl methyltransferase family.

The protein localises to the membrane. The protein operates within secondary metabolite biosynthesis. Functionally, probable O-methyltransferase; part of the gene cluster that mediates the biosynthesis of ustilaginoidins, dimeric gamma-naphthopyrones isolated from different fungal species. The first step in the biosynthesis of ustilaginoidins is the production of gamma-naphthopyrone precursor YWA1 by the non-reducing polyketide synthase ustP, via condensation of one acetyl-CoA starter unit with 6 malonyl-CoA units. YWA1 is then probably substrate of the ustZ to yield norrubrofusarin via a dehydration reaction. A key enzyme in the biosynthetic pathway is the laccase ustL, which catalyzes the oxidative dimerization of norrubrofusarin to ustilaginoidin A. It can produce the M- and P-atropisomers in varying amounts, depending on the reaction conditions. For the biosynthesis of 3-methylustilaginoid in derivatives such as chaetochromin A, a methylated derivative of YWA1 is required. The C-methylation is considered to be catalyzed by ustM, the phosphopantetheine attachment site of which indicates that it acts on the growing polyketide chain before release of the product. For the biosynthesis of chaetochromin A, it is assumed that saturation of the D2 double bond takes place before dimerization, and is probably catalyzed by an external reductase because no candidate gene was identified within the cluster. The polypeptide is Probable O-methyltransferase ustE (Ustilaginoidea virens (Rice false smut fungus)).